Reading from the N-terminus, the 159-residue chain is Cytochrome c-type biogenesis protein CcmE (159 aa).

The Cytoplasmic portion of the chain corresponds to 1–7 (MTPRQRR). Residues 8–28 (LGMLLAALACAGIALALVLNA) form a helical; Signal-anchor for type II membrane protein membrane-spanning segment. Residues 29 to 159 (FRSNLVFFFS…LAEGERETQR (131 aa)) lie on the Periplasmic side of the membrane. Residues His-123 and Tyr-127 each contribute to the heme site.

The protein belongs to the CcmE/CycJ family.

It localises to the cell inner membrane. Its function is as follows. Heme chaperone required for the biogenesis of c-type cytochromes. Transiently binds heme delivered by CcmC and transfers the heme to apo-cytochromes in a process facilitated by CcmF and CcmH. The chain is Cytochrome c-type biogenesis protein CcmE from Cupriavidus pinatubonensis (strain JMP 134 / LMG 1197) (Cupriavidus necator (strain JMP 134)).